The chain runs to 255 residues: MNKFLILDGMNLVRRIHAAQPNEADISGLKERVHGACKKLLKFHQPSHVAIVWDGNAISWRKALYEDYKKGRKPMPEALSNGLGDIKSYLAEHHIASLEADSEADDVIATLATKLVSIGGEAIIVSTDKGFCQLKHPNIKQWDHFNQTYMTVEAMEQKLGVEHKQFIDYLALAGDSGNKIPGVPGIGPKSAVELLKIFRSLANIYSSIEQVGSKQAKKLEAGKHLARLSYKLVQLQLDMPLNANLKQFRLPKANS.

A Mg(2+)-binding site is contributed by aspartate 105. Positions 162 to 254 (EHKQFIDYLA…LKQFRLPKAN (93 aa)) constitute a 5'-3' exonuclease domain. K(+) contacts are provided by leucine 172, alanine 173, proline 181, valine 183, and isoleucine 186. Residues 185–190 (GIGPKS) are interaction with DNA.

This sequence belongs to the Xni family. Requires Mg(2+) as cofactor. K(+) serves as cofactor.

Its function is as follows. Has flap endonuclease activity. During DNA replication, flap endonucleases cleave the 5'-overhanging flap structure that is generated by displacement synthesis when DNA polymerase encounters the 5'-end of a downstream Okazaki fragment. The sequence is that of Flap endonuclease Xni from Shewanella piezotolerans (strain WP3 / JCM 13877).